The chain runs to 504 residues: Cytochrome P450 4A24 (504 aa).

A run of 2 helical transmembrane segments spans residues 6–26 (LASASGLLQVASLLGLLLLLL) and 112–132 (VVYRLLIPWIGCGLLLLNGQT). Residue Cys-451 coordinates heme.

Belongs to the cytochrome P450 family. Heme serves as cofactor.

It is found in the endoplasmic reticulum membrane. The catalysed reaction is an omega-methyl-long-chain fatty acid + reduced [NADPH--hemoprotein reductase] + O2 = an omega-hydroxy-long-chain fatty acid + oxidized [NADPH--hemoprotein reductase] + H2O + H(+). Catalyzes the omega- and (omega-1)-hydroxylation of various fatty acids such as laurate and palmitate. Has no activity toward taurochenodeoxycholic acid. The chain is Cytochrome P450 4A24 (CYP4A24) from Sus scrofa (Pig).